The sequence spans 275 residues: Large ribosomal subunit protein uL2 (275 aa).

The disordered stretch occupies residues 219–263; sequence EVRGAAMNPRDHPHGGGEGRAPRGMPTPKTKWGKPARGVKTRHNP. Residues 227–239 show a composition bias toward basic and acidic residues; sequence PRDHPHGGGEGRA. The span at 249 to 262 shows a compositional bias: basic residues; the sequence is KWGKPARGVKTRHN.

Belongs to the universal ribosomal protein uL2 family. As to quaternary structure, part of the 50S ribosomal subunit. Forms a bridge to the 30S subunit in the 70S ribosome.

In terms of biological role, one of the primary rRNA binding proteins. Required for association of the 30S and 50S subunits to form the 70S ribosome, for tRNA binding and peptide bond formation. It has been suggested to have peptidyltransferase activity; this is somewhat controversial. Makes several contacts with the 16S rRNA in the 70S ribosome. The sequence is that of Large ribosomal subunit protein uL2 from Roseiflexus castenholzii (strain DSM 13941 / HLO8).